The following is a 551-amino-acid chain: Calcium-dependent protein kinase 19 (551 aa).

Residue Gly2 is the site of N-myristoyl glycine attachment. A disordered region spans residues 12 to 46 (VKKPTPDISGEQNTEVKSREITPKEQPRQRQPAPR). The span at 25-39 (TEVKSREITPKEQPR) shows a compositional bias: basic and acidic residues. One can recognise a Protein kinase domain in the interval 98–357 (YSLGRELGRG…AAQVLEHPWI (260 aa)). ATP is bound by residues 104–112 (LGRGQFGIT) and Lys127. Asp222 serves as the catalytic Proton acceptor. At Ser263 the chain carries Phosphoserine. The autoinhibitory domain stretch occupies residues 363 to 393 (ASDKPIDSAVLSRMKQLRAMNKLKKLAFKFI). 4 EF-hand domains span residues 400–435 (EELK…LGSR), 436–471 (LTET…RFRV), 472–507 (ERED…YNMG), and 512–542 (IKEI…CSQS). Residues Asp413, Asp415, Ser417, Thr419, Glu424, Asp449, Asp451, Asn453, Thr455, Glu460, Asp485, Asp487, Ser489, Glu496, Asp520, Asp522, Asp524, Ser526, and Glu531 each contribute to the Ca(2+) site.

It belongs to the protein kinase superfamily. Ser/Thr protein kinase family. CDPK subfamily.

The protein localises to the membrane. The enzyme catalyses L-seryl-[protein] + ATP = O-phospho-L-seryl-[protein] + ADP + H(+). It catalyses the reaction L-threonyl-[protein] + ATP = O-phospho-L-threonyl-[protein] + ADP + H(+). Activated by calcium. Autophosphorylation may play an important role in the regulation of the kinase activity. May play a role in signal transduction pathways that involve calcium as a second messenger. In Arabidopsis thaliana (Mouse-ear cress), this protein is Calcium-dependent protein kinase 19 (CPK19).